A 65-amino-acid chain; its full sequence is Large ribosomal subunit protein uL29 (65 aa).

The protein belongs to the universal ribosomal protein uL29 family.

This is Large ribosomal subunit protein uL29 from Hyphomonas neptunium (strain ATCC 15444).